A 125-amino-acid chain; its full sequence is MLSRLLKEHQAKQNERKELQEKRRREAIAAATCLTEALVDHLNVGVAQAYMNQRKLDHEVKTLQVQAAQFAKQTGQWIGMVENFNQALKEIGDVENWARSIELDMRTIATALEYVYKGQLQSAPS.

Positions 1-31 (MLSRLLKEHQAKQNERKELQEKRRREAIAAA) form a coiled coil.

It belongs to the BLOC1S1 family. As to quaternary structure, component of the biogenesis of lysosome-related organelles complex 1 (BLOC-1) composed of BLOC1S1, BLOC1S2, BLOC1S3, BLOC1S4, BLOC1S5, BLOC1S6, DTNBP1/BLOC1S7 and SNAPIN/BLOC1S8. Octamer composed of one copy each BLOC1S1, BLOC1S2, BLOC1S3, BLOC1S4, BLOC1S5, BLOC1S6, DTNBP1/BLOC1S7 and SNAPIN/BLOC1S8. The BLOC-1 complex associates with the AP-3 protein complex and membrane protein cargos. Interacts with ATP5F1A and NDUFA9; involved in their acetylation on lysine residues. Interacts with KXD1.

The protein resides in the mitochondrion intermembrane space. Its subcellular location is the mitochondrion matrix. It localises to the cytoplasm. It is found in the cytosol. The protein localises to the lysosome membrane. The catalysed reaction is L-lysyl-[protein] + acetyl-CoA = N(6)-acetyl-L-lysyl-[protein] + CoA + H(+). Component of the BLOC-1 complex, a complex that is required for normal biogenesis of lysosome-related organelles (LRO), such as platelet dense granules and melanosomes. In concert with the AP-3 complex, the BLOC-1 complex is required to target membrane protein cargos into vesicles assembled at cell bodies for delivery into neurites and nerve terminals. The BLOC-1 complex, in association with SNARE proteins, is also proposed to be involved in neurite extension. As part of the BORC complex may play a role in lysosomes movement and localization at the cell periphery. The BORC complex is most probably associated with the cytosolic face of lysosomes, may recruit ARL8B and couple lysosomes to microtubule plus-end-directed kinesin motor. In terms of biological role, acts as a protein acetyltransferase. Negatively regulates aerobic respiration through mitochondrial protein lysine-acetylation. May counteract the action of the deacetylase SIRT3 by acetylating and regulating proteins of the mitochondrial respiratory chain including ATP5F1A and NDUFA9. Acts as a regulator of mTORC2 signaling in response to hypotoxic stress by mediating acetylation of RICTOR, thereby protecting RICTOR against ubiquitination and subsequent degradation by the proteasome. This chain is Biogenesis of lysosome-related organelles complex 1 subunit 1 (Bloc1s1), found in Mus musculus (Mouse).